Consider the following 122-residue polypeptide: S-adenosylmethionine decarboxylase proenzyme (122 aa).

The active-site Schiff-base intermediate with substrate; via pyruvic acid is Ser63. At Ser63 the chain carries Pyruvic acid (Ser); by autocatalysis. Residue His68 is the Proton acceptor; for processing activity of the active site. Cys83 functions as the Proton donor; for catalytic activity in the catalytic mechanism.

It belongs to the prokaryotic AdoMetDC family. Type 1 subfamily. Heterotetramer of two alpha and two beta chains arranged as a dimer of alpha/beta heterodimers. Requires pyruvate as cofactor. In terms of processing, is synthesized initially as an inactive proenzyme. Formation of the active enzyme involves a self-maturation process in which the active site pyruvoyl group is generated from an internal serine residue via an autocatalytic post-translational modification. Two non-identical subunits are generated from the proenzyme in this reaction, and the pyruvate is formed at the N-terminus of the alpha chain, which is derived from the carboxyl end of the proenzyme. The post-translation cleavage follows an unusual pathway, termed non-hydrolytic serinolysis, in which the side chain hydroxyl group of the serine supplies its oxygen atom to form the C-terminus of the beta chain, while the remainder of the serine residue undergoes an oxidative deamination to produce ammonia and the pyruvoyl group blocking the N-terminus of the alpha chain.

It carries out the reaction S-adenosyl-L-methionine + H(+) = S-adenosyl 3-(methylsulfanyl)propylamine + CO2. The protein operates within amine and polyamine biosynthesis; S-adenosylmethioninamine biosynthesis; S-adenosylmethioninamine from S-adenosyl-L-methionine: step 1/1. Its function is as follows. Catalyzes the decarboxylation of S-adenosylmethionine to S-adenosylmethioninamine (dcAdoMet), the propylamine donor required for the synthesis of the polyamines spermine and spermidine from the diamine putrescine. The chain is S-adenosylmethionine decarboxylase proenzyme from Methanococcus vannielii (strain ATCC 35089 / DSM 1224 / JCM 13029 / OCM 148 / SB).